Reading from the N-terminus, the 955-residue chain is UvrABC system protein A (955 aa).

ATP is bound at residue 35-42; sequence GLSGSGKS. 2 ABC transporter domains span residues 322-601 and 621-951; these read WGST…EESI and GHDN…RYLK. ATP is bound at residue 654–661; the sequence is GVSGSGKS. Residues 754–780 form a C4-type zinc finger; the sequence is CEACQGDGLIKIEMHFLPDVYVKCDIC.

The protein belongs to the ABC transporter superfamily. UvrA family. In terms of assembly, forms a heterotetramer with UvrB during the search for lesions.

It is found in the cytoplasm. Functionally, the UvrABC repair system catalyzes the recognition and processing of DNA lesions. UvrA is an ATPase and a DNA-binding protein. A damage recognition complex composed of 2 UvrA and 2 UvrB subunits scans DNA for abnormalities. When the presence of a lesion has been verified by UvrB, the UvrA molecules dissociate. In Rickettsia conorii (strain ATCC VR-613 / Malish 7), this protein is UvrABC system protein A.